Consider the following 274-residue polypeptide: Ribosomal RNA small subunit methyltransferase A (274 aa).

S-adenosyl-L-methionine contacts are provided by His-15, Leu-17, Gly-42, Glu-64, Asp-89, and Asn-109.

It belongs to the class I-like SAM-binding methyltransferase superfamily. rRNA adenine N(6)-methyltransferase family. RsmA subfamily.

The protein localises to the cytoplasm. The catalysed reaction is adenosine(1518)/adenosine(1519) in 16S rRNA + 4 S-adenosyl-L-methionine = N(6)-dimethyladenosine(1518)/N(6)-dimethyladenosine(1519) in 16S rRNA + 4 S-adenosyl-L-homocysteine + 4 H(+). Specifically dimethylates two adjacent adenosines (A1518 and A1519) in the loop of a conserved hairpin near the 3'-end of 16S rRNA in the 30S particle. May play a critical role in biogenesis of 30S subunits. The chain is Ribosomal RNA small subunit methyltransferase A from Synechococcus sp. (strain CC9902).